The sequence spans 371 residues: Putative RING finger protein ORF117 (371 aa).

The segment at 72–108 adopts an RING-type zinc-finger fold; the sequence is CCICFRKDVIYKEVPCGHYICVECYKEPIRNVCPECN. A compositionally biased stretch (acidic residues) spans 178–192; that stretch reads EEEMNESEAEEEEPV. Residues 178 to 218 form a disordered region; it reads EEEMNESEAEEEEPVPEIAQFEALNTPPPPPTNRRPKIRRP.

The polypeptide is Putative RING finger protein ORF117 (Magallana gigas (Pacific oyster)).